Consider the following 385-residue polypeptide: Fe-S cluster assembly protein DRE2 (385 aa).

Residues 1-177 (MTSSINILLL…KKLNKNDMTI (177 aa)) are N-terminal SAM-like domain. Positions 178–240 (NVPQEIDNIT…NDLLKYNNHN (63 aa)) are linker. Positions 200 to 226 (YFSSDDENSSDGSLSDNANEEEEDDDE) are disordered. Residues 217 to 226 (ANEEEEDDDE) are compositionally biased toward acidic residues. 4 residues coordinate [2Fe-2S] cluster: Cys-261, Cys-275, Cys-278, and Cys-280. The fe-S binding site A stretch occupies residues 261-280 (CELSLNGGKKRKKACKDCTC). [4Fe-4S] cluster is bound by residues Cys-348, Cys-351, Cys-359, and Cys-362. 2 consecutive short sequence motifs (cx2C motif) follow at residues 348–351 (CGSC) and 359–362 (CDGC). A fe-S binding site B region spans residues 348–362 (CGSCALGDAFRCDGC).

This sequence belongs to the anamorsin family. Monomer. Interacts with TAH18. Interacts with MIA40. It depends on [2Fe-2S] cluster as a cofactor. Requires [4Fe-4S] cluster as cofactor.

The protein resides in the cytoplasm. Its subcellular location is the mitochondrion intermembrane space. Its function is as follows. Component of the cytosolic iron-sulfur (Fe-S) protein assembly (CIA) machinery required for the maturation of extramitochondrial Fe-S proteins. Part of an electron transfer chain functioning in an early step of cytosolic Fe-S biogenesis, facilitating the de novo assembly of a [4Fe-4S] cluster on the scaffold complex CFD1-NBP35. Electrons are transferred to DRE2 from NADPH via the FAD- and FMN-containing protein TAH18. TAH18-DRE2 are also required for the assembly of the diferric tyrosyl radical cofactor of ribonucleotide reductase (RNR), probably by providing electrons for reduction during radical cofactor maturation in the catalytic small subunit RNR2. The protein is Fe-S cluster assembly protein DRE2 of Candida dubliniensis (strain CD36 / ATCC MYA-646 / CBS 7987 / NCPF 3949 / NRRL Y-17841) (Yeast).